A 297-amino-acid chain; its full sequence is rRNA 2'-O-methyltransferase fibrillarin (297 aa).

The tract at residues 1–56 (MRGGFGRGGGGRGGSRGGRGGFGRGGGRGGGRGGGRGGGRGGGRGGGRGGGRGGAG) is disordered. An asymmetric dimethylarginine mark is found at R2, R7, R12, R16, R19, R24, R28, R32, R36, R40, R44, R48, and R52. S-adenosyl-L-methionine is bound by residues 149-150 (TT), 168-169 (EF), 192-193 (DA), and 212-215 (DVAQ).

This sequence belongs to the methyltransferase superfamily. Fibrillarin family. Component of box C/D small nucleolar ribonucleoprotein (snoRNP) particles. It is associated with the U3, U8 and U13 small nuclear RNAs. In terms of processing, by homology to other fibrillarins, some or all of the N-terminal domain arginines are modified to asymmetric dimethylarginine (DMA).

The protein resides in the nucleus. Its subcellular location is the nucleolus. It carries out the reaction L-glutaminyl-[histone H2A] + S-adenosyl-L-methionine = N(5)-methyl-L-glutaminyl-[histone H2A] + S-adenosyl-L-homocysteine + H(+). In terms of biological role, S-adenosyl-L-methionine-dependent methyltransferase that has the ability to methylate both RNAs and proteins. Involved in pre-rRNA processing. Utilizes the methyl donor S-adenosyl-L-methionine to catalyze the site-specific 2'-hydroxyl methylation of ribose moieties in pre-ribosomal RNA. Site specificity is provided by a guide RNA that base pairs with the substrate. Methylation occurs at a characteristic distance from the sequence involved in base pairing with the guide RNA. Also acts as a protein methyltransferase by mediating methylation of 'Gln-105' of histone H2A (H2AQ105me), a modification that impairs binding of the FACT complex and is specifically present at 35S ribosomal DNA locus. The sequence is that of rRNA 2'-O-methyltransferase fibrillarin from Leishmania major.